Here is a 41-residue protein sequence, read N- to C-terminus: Photosystem I reaction center subunit IX (41 aa).

Residues 7–27 (YLSTAPVVATGWFIVTAALLI) form a helical membrane-spanning segment.

This sequence belongs to the PsaJ family.

It localises to the plastid. The protein resides in the chloroplast thylakoid membrane. In terms of biological role, may help in the organization of the PsaE and PsaF subunits. In Tetradesmus obliquus (Green alga), this protein is Photosystem I reaction center subunit IX.